Reading from the N-terminus, the 85-residue chain is Arminin 524 (85 aa).

The N-terminal stretch at 1–18 (MKAVFAILFLAFIALTYA) is a signal peptide. Residues 19–57 (KSYDEVKEEIKNEVEREIFEDLEEESDELDNDVEEFNDA) constitute a propeptide that is removed on maturation. The residue at position 82 (Ala-82) is an Alanine amide.

This sequence belongs to the arminin family. Expressed in entodermal epithelium along the body column.

It is found in the secreted. It localises to the target cell membrane. Functionally, antimicrobial peptide with a broad-spectrum antimicrobial activity. Keeps its antibacterial activity under a wide range of salt concentrations that mimic physiological conditions of human blood, which is surprising, since Hydra is an obligate freshwater animal with nearly no salt tolerance. Does not affect red blood cells. This is Arminin 524 from Hydra oligactis (Brown hydra).